The chain runs to 216 residues: Uracil phosphoribosyltransferase (216 aa).

5-phospho-alpha-D-ribose 1-diphosphate-binding positions include arginine 85, arginine 110, and 135-143 (DPMVATGYS). Residues isoleucine 200 and 205–207 (GDA) contribute to the uracil site. Aspartate 206 serves as a coordination point for 5-phospho-alpha-D-ribose 1-diphosphate.

Belongs to the UPRTase family. Mg(2+) is required as a cofactor.

It catalyses the reaction UMP + diphosphate = 5-phospho-alpha-D-ribose 1-diphosphate + uracil. It participates in pyrimidine metabolism; UMP biosynthesis via salvage pathway; UMP from uracil: step 1/1. With respect to regulation, allosterically activated by GTP. In terms of biological role, catalyzes the conversion of uracil and 5-phospho-alpha-D-ribose 1-diphosphate (PRPP) to UMP and diphosphate. This is Uracil phosphoribosyltransferase from Burkholderia ambifaria (strain ATCC BAA-244 / DSM 16087 / CCUG 44356 / LMG 19182 / AMMD) (Burkholderia cepacia (strain AMMD)).